The sequence spans 465 residues: GTPase Der (465 aa).

EngA-type G domains are found at residues 3–167 and 179–352; these read PLVA…PEEG and VRIA…ASAT. GTP-binding positions include 9–16, 57–61, 119–122, 185–192, 232–236, and 297–300; these read GRPNVGKS, DTGGI, NKID, DTAGL, and NKWD. The KH-like domain maps to 353–437; the sequence is HEFSTSEVNQ…PVRFIFREGA (85 aa).

It belongs to the TRAFAC class TrmE-Era-EngA-EngB-Septin-like GTPase superfamily. EngA (Der) GTPase family. Associates with the 50S ribosomal subunit.

GTPase that plays an essential role in the late steps of ribosome biogenesis. This is GTPase Der from Xanthomonas axonopodis pv. citri (strain 306).